Consider the following 244-residue polypeptide: uncharacterized protein (244 aa).

Transmembrane regions (helical) follow at residues 21-41 (FPYS…YGIY), 44-64 (ALGF…AGSV), 66-86 (FIAA…LITL), 139-159 (WYMF…AAMG), 165-185 (VLPF…LVIF), and 199-219 (LLGL…YFLI).

This sequence belongs to the AzlC family.

The protein resides in the cell membrane. This is an uncharacterized protein from Haemophilus influenzae (strain ATCC 51907 / DSM 11121 / KW20 / Rd).